A 137-amino-acid chain; its full sequence is Large ribosomal subunit protein uL16 (137 aa).

The protein belongs to the universal ribosomal protein uL16 family. Part of the 50S ribosomal subunit.

Binds 23S rRNA and is also seen to make contacts with the A and possibly P site tRNAs. The sequence is that of Large ribosomal subunit protein uL16 from Pseudomonas aeruginosa (strain LESB58).